The chain runs to 228 residues: MQKLKQQVFDANMDLPRYGLVTFTWGNVSAIDRERGLVVIKPSGVAYETMKVDDMVVVDMDGKVVEGRYRPSSDTATHLALYQRYPSLGGVVHTHSTHATAWAQAGMAIPALGTTHADYFFGDIPCTRALSEEEVQGEYELNTGKVIIETLGEVEPLHTPGIVVYQHGPFAWGKDAHDAVHNAVVMEEVARMAWIARGINPALNPIDDYLMNKHFMRKHGPNAYYGQK.

Substrate is bound by residues 26–27, 43–44, and 72–73; these read GN, SG, and SS. The Zn(2+) site is built by aspartate 74, histidine 93, and histidine 95. Residue aspartate 118 is the Proton donor/acceptor of the active site. Histidine 167 contributes to the Zn(2+) binding site. The Proton donor/acceptor role is filled by tyrosine 225.

This sequence belongs to the aldolase class II family. AraD/FucA subfamily. Requires Zn(2+) as cofactor.

The enzyme catalyses L-ribulose 5-phosphate = D-xylulose 5-phosphate. The protein operates within cofactor degradation; L-ascorbate degradation; D-xylulose 5-phosphate from L-ascorbate: step 4/4. Functionally, catalyzes the isomerization of L-ribulose 5-phosphate to D-xylulose 5-phosphate. Is involved in the anaerobic L-ascorbate utilization. The sequence is that of L-ribulose-5-phosphate 4-epimerase UlaF from Salmonella paratyphi B (strain ATCC BAA-1250 / SPB7).